A 282-amino-acid chain; its full sequence is Undecaprenyl-diphosphatase (282 aa).

8 helical membrane-spanning segments follow: residues 1–21 (MNLF…FLPI), 40–60 (GAAF…IYFA), 89–109 (WMIA…KHEI), 112–132 (VLRS…VLVV), 153–173 (LSWT…IPGS), 196–216 (FSFL…LYQT), 228–248 (LNLA…IAFL), and 258–278 (GIFI…IGTG).

The protein belongs to the UppP family.

The protein resides in the cell inner membrane. It catalyses the reaction di-trans,octa-cis-undecaprenyl diphosphate + H2O = di-trans,octa-cis-undecaprenyl phosphate + phosphate + H(+). Functionally, catalyzes the dephosphorylation of undecaprenyl diphosphate (UPP). Confers resistance to bacitracin. The chain is Undecaprenyl-diphosphatase from Chlorobaculum tepidum (strain ATCC 49652 / DSM 12025 / NBRC 103806 / TLS) (Chlorobium tepidum).